A 261-amino-acid chain; its full sequence is Rhomboid-type serine protease 2 (261 aa).

A run of 5 helical transmembrane segments spans residues 17–37 (LTAG…VFPI), 58–78 (LYPL…SLFV), 94–114 (ITLN…GMLL), 116–136 (PNVY…YFAV), and 155–175 (LYIP…SSFV). S124 (nucleophile) is an active-site residue. H177 is an active-site residue.

Belongs to the peptidase S54 family.

It localises to the golgi apparatus membrane. It is found in the golgi apparatus. The protein resides in the cis-Golgi network membrane. The catalysed reaction is Cleaves type-1 transmembrane domains using a catalytic dyad composed of serine and histidine that are contributed by different transmembrane domains.. Functionally, probable rhomboid-type serine protease that catalyzes intramembrane proteolysis. The chain is Rhomboid-type serine protease 2 (RBD2) from Eremothecium gossypii (strain ATCC 10895 / CBS 109.51 / FGSC 9923 / NRRL Y-1056) (Yeast).